The sequence spans 218 residues: Deoxyribose-phosphate aldolase (218 aa).

Aspartate 92 serves as the catalytic Proton donor/acceptor. Lysine 156 functions as the Schiff-base intermediate with acetaldehyde in the catalytic mechanism. Residue lysine 185 is the Proton donor/acceptor of the active site.

Belongs to the DeoC/FbaB aldolase family. DeoC type 1 subfamily.

The protein resides in the cytoplasm. It catalyses the reaction 2-deoxy-D-ribose 5-phosphate = D-glyceraldehyde 3-phosphate + acetaldehyde. The protein operates within carbohydrate degradation; 2-deoxy-D-ribose 1-phosphate degradation; D-glyceraldehyde 3-phosphate and acetaldehyde from 2-deoxy-alpha-D-ribose 1-phosphate: step 2/2. Its function is as follows. Catalyzes a reversible aldol reaction between acetaldehyde and D-glyceraldehyde 3-phosphate to generate 2-deoxy-D-ribose 5-phosphate. This Desulfitobacterium hafniense (strain DSM 10664 / DCB-2) protein is Deoxyribose-phosphate aldolase.